We begin with the raw amino-acid sequence, 62 residues long: MSEVIIHEDENFERALKRFKKKCEKAGILSDLRKHRHYEKPSERRKRKMNAAVRKNRRTRHG.

Positions 38 to 62 are disordered; that stretch reads YEKPSERRKRKMNAAVRKNRRTRHG.

Belongs to the bacterial ribosomal protein bS21 family.

The protein is Small ribosomal subunit protein bS21 of Gemmatimonas aurantiaca (strain DSM 14586 / JCM 11422 / NBRC 100505 / T-27).